A 286-amino-acid polypeptide reads, in one-letter code: ATP synthase gamma chain (286 aa).

Belongs to the ATPase gamma chain family. As to quaternary structure, F-type ATPases have 2 components, CF(1) - the catalytic core - and CF(0) - the membrane proton channel. CF(1) has five subunits: alpha(3), beta(3), gamma(1), delta(1), epsilon(1). CF(0) has three main subunits: a, b and c.

It localises to the cell inner membrane. Functionally, produces ATP from ADP in the presence of a proton gradient across the membrane. The gamma chain is believed to be important in regulating ATPase activity and the flow of protons through the CF(0) complex. This chain is ATP synthase gamma chain, found in Pseudoalteromonas translucida (strain TAC 125).